A 197-amino-acid chain; its full sequence is MSKLVLATGNQGKVKEMASLLADFGFDVVAQSDFNVSSVAETGTTFIENAIIKARHAAKETGLPAIADDSGLEVDFLQGAPGIYSARFAGEDATDQQNLEKLLADMEGVPAEQRTARFHCVLVMMRHENDPTPLVCHGSWEGSILTQAQGENGFGYDPVFWVPEDQCASAQLESPRKKELSHRGKALQKLFAALKDA.

Thr8–Lys13 lines the substrate pocket. Asp69 acts as the Proton acceptor in catalysis. A Mg(2+)-binding site is contributed by Asp69. Substrate-binding positions include Ser70, Phe154–Asp157, Lys177, and His182–Arg183.

This sequence belongs to the HAM1 NTPase family. Homodimer. Mg(2+) is required as a cofactor.

The enzyme catalyses XTP + H2O = XMP + diphosphate + H(+). It carries out the reaction dITP + H2O = dIMP + diphosphate + H(+). It catalyses the reaction ITP + H2O = IMP + diphosphate + H(+). In terms of biological role, pyrophosphatase that catalyzes the hydrolysis of nucleoside triphosphates to their monophosphate derivatives, with a high preference for the non-canonical purine nucleotides XTP (xanthosine triphosphate), dITP (deoxyinosine triphosphate) and ITP. Seems to function as a house-cleaning enzyme that removes non-canonical purine nucleotides from the nucleotide pool, thus preventing their incorporation into DNA/RNA and avoiding chromosomal lesions. The sequence is that of dITP/XTP pyrophosphatase from Photobacterium profundum (strain SS9).